We begin with the raw amino-acid sequence, 189 residues long: Adenylate kinase (189 aa).

Position 10–15 (10–15 (AAGKGT)) interacts with ATP. An NMP region spans residues 30–59 (STGDMLRAAIASGSELGQKVKGVLDRGELV). AMP contacts are provided by residues T31, R36, 57 to 59 (ELV), 85 to 88 (GFPR), and Q92. An LID region spans residues 126–136 (KRFAEQGRPDD). An ATP-binding site is contributed by R127. Positions 133 and 144 each coordinate AMP. A172 serves as a coordination point for ATP.

Belongs to the adenylate kinase family. As to quaternary structure, monomer.

It localises to the cytoplasm. It catalyses the reaction AMP + ATP = 2 ADP. The protein operates within purine metabolism; AMP biosynthesis via salvage pathway; AMP from ADP: step 1/1. Its function is as follows. Catalyzes the reversible transfer of the terminal phosphate group between ATP and AMP. Plays an important role in cellular energy homeostasis and in adenine nucleotide metabolism. This is Adenylate kinase from Caulobacter sp. (strain K31).